We begin with the raw amino-acid sequence, 312 residues long: MNKSNTAIDPTNVIEAGPDSSVADVQQKSWKDYLVLAKQGIVTSNLITTFAGIYLAIVYTGTVFTMHLDTMIFALLGAALVMAGGCTLNNYIDRDIDHLMERTKERPTVTGRFSAKHVLLVGLAQAALGIIFLALTTPTAAVIGLIGLFIYVVLYTMWTKRTTTLNTIVGSFSGAVPPLIGWAAIDGGLHLYAWLLFFIMFLWQPPHFLALAMKRVEEYRAAGIPMLPVVAGFEMTKRQMVVYVAALLPVSLMLYPFGLVYTIVAAVLGVGWLALGIAGFKMKDDIKWARLMFVYSLNYLTILFVLMVIVHF.

Over 1–36 (MNKSNTAIDPTNVIEAGPDSSVADVQQKSWKDYLVL) the chain is Cytoplasmic. Residues 37–55 (AKQGIVTSNLITTFAGIYL) traverse the membrane as a helical segment. The Extracellular segment spans residues 56 to 69 (AIVYTGTVFTMHLD). A helical membrane pass occupies residues 70–88 (TMIFALLGAALVMAGGCTL). The Cytoplasmic segment spans residues 89–110 (NNYIDRDIDHLMERTKERPTVT). A helical membrane pass occupies residues 111-129 (GRFSAKHVLLVGLAQAALG). Residues 130–138 (IIFLALTTP) are Extracellular-facing. Residues 139–157 (TAAVIGLIGLFIYVVLYTM) traverse the membrane as a helical segment. Residues 158 to 228 (WTKRTTTLNT…YRAAGIPMLP (71 aa)) lie on the Cytoplasmic side of the membrane. The chain crosses the membrane as a helical span at residues 229 to 247 (VVAGFEMTKRQMVVYVAAL). At 248 to 259 (LPVSLMLYPFGL) the chain is on the extracellular side. The chain crosses the membrane as a helical span at residues 260–275 (VYTIVAAVLGVGWLAL). Topologically, residues 276–296 (GIAGFKMKDDIKWARLMFVYS) are cytoplasmic. A helical membrane pass occupies residues 297-307 (LNYLTILFVLM). Residues 308–312 (VIVHF) are Extracellular-facing.

Belongs to the UbiA prenyltransferase family.

The protein resides in the cell membrane. The enzyme catalyses heme b + (2E,6E)-farnesyl diphosphate + H2O = Fe(II)-heme o + diphosphate. It functions in the pathway porphyrin-containing compound metabolism; heme O biosynthesis; heme O from protoheme: step 1/1. In terms of biological role, converts protoheme IX and farnesyl diphosphate to heme O. The chain is Protoheme IX farnesyltransferase (ctaB) from Alkalihalophilus pseudofirmus (strain ATCC BAA-2126 / JCM 17055 / OF4) (Bacillus pseudofirmus).